The following is a 1013-amino-acid chain: 2-oxoglutarate dehydrogenase, mitochondrial (1013 aa).

A mitochondrion-targeting transit peptide spans 1–39 (MFTLKQVINKSIQTSMKNGVMSSAVKRSFSTVGGINQPK). Residues Arg302, Asp403, Asn436, Ile438, and Gln664 each coordinate thiamine diphosphate. Asp403, Asn436, and Ile438 together coordinate Mg(2+).

It belongs to the alpha-ketoglutarate dehydrogenase family. In terms of assembly, homodimer. Component of the 2-oxoglutarate dehydrogenase complex. Thiamine diphosphate serves as cofactor. It depends on Mg(2+) as a cofactor.

Its subcellular location is the mitochondrion matrix. It catalyses the reaction N(6)-[(R)-lipoyl]-L-lysyl-[protein] + 2-oxoglutarate + H(+) = N(6)-[(R)-S(8)-succinyldihydrolipoyl]-L-lysyl-[protein] + CO2. In terms of biological role, the 2-oxoglutarate dehydrogenase complex catalyzes the overall conversion of 2-oxoglutarate to succinyl-CoA and CO(2). It contains multiple copies of three enzymatic components: 2-oxoglutarate dehydrogenase (E1), dihydrolipoamide succinyltransferase (E2) and lipoamide dehydrogenase (E3). The polypeptide is 2-oxoglutarate dehydrogenase, mitochondrial (ogdh) (Dictyostelium discoideum (Social amoeba)).